We begin with the raw amino-acid sequence, 22 residues long: thr operon leader peptide (22 aa).

The protein belongs to the thr operon leader peptide family.

Its function is as follows. This protein is involved in control of the biosynthesis of threonine. This Yersinia enterocolitica serotype O:8 / biotype 1B (strain NCTC 13174 / 8081) protein is thr operon leader peptide.